Reading from the N-terminus, the 613-residue chain is Protein starmaker (613 aa).

The signal sequence occupies residues 1–20 (MLSRTVFVPLILAFVGVSIS). Positions 42–613 (FTVQFNVGTP…DGRKTSMPIS (572 aa)) are disordered. 5 stretches are compositionally biased toward basic and acidic residues: residues 62-72 (DGKDSAEKNEA), 117-132 (SAEK…DKPD), 147-193 (DASH…KPEG), 206-284 (SAEK…KSDD), and 291-449 (DEQK…HSDS). A compositionally biased stretch (acidic residues) spans 450–465 (DSDSDSDSDSDSDSDS). 3 stretches are compositionally biased toward basic and acidic residues: residues 467-482 (SNSR…SSES), 509-521 (DKDS…KTDS), and 538-554 (DDSK…TAEK). A compositionally biased stretch (acidic residues) spans 555–573 (TDEDSHDVSDDDDDIDAHD). The segment covering 574–607 (DEAGVEHGTDEASKPHQEPDHHDDTTHGSDDGRK) has biased composition (basic and acidic residues).

The protein resides in the secreted. Essential for the formation of otoliths in the inner ear of developing larvae and for the perception of gravity and acceleration. May be one of the organic components of the ortholiths. The sequence is that of Protein starmaker (stm) from Danio rerio (Zebrafish).